Here is a 130-residue protein sequence, read N- to C-terminus: MARVTVEDCIDKVDNRFDLVLLAAHRARMISSGSQLTIDRDNDKNPVVALREIADSTISPEDLKEELVHSLQKFVEVDEPEPDTVPLIGSAGASVDADDTEVAVERMTEEELLKGLEGLAPPEEQPEEDE.

Residues Glu-110–Glu-130 are disordered.

The protein belongs to the RNA polymerase subunit omega family. As to quaternary structure, the RNAP catalytic core consists of 2 alpha, 1 beta, 1 beta' and 1 omega subunit. When a sigma factor is associated with the core the holoenzyme is formed, which can initiate transcription.

The catalysed reaction is RNA(n) + a ribonucleoside 5'-triphosphate = RNA(n+1) + diphosphate. Its function is as follows. Promotes RNA polymerase assembly. Latches the N- and C-terminal regions of the beta' subunit thereby facilitating its interaction with the beta and alpha subunits. This is DNA-directed RNA polymerase subunit omega from Bradyrhizobium sp. (strain BTAi1 / ATCC BAA-1182).